Reading from the N-terminus, the 880-residue chain is Potassium/sodium hyperpolarization-activated cyclic nucleotide-gated channel 1 (880 aa).

The disordered stretch occupies residues 1–80 (MEGGGKPNSS…SAGGLEDAEG (80 aa)). Over 1 to 136 (MEGGGKPNSS…WIIHSYSDFR (136 aa)) the chain is Cytoplasmic. Low complexity predominate over residues 8–34 (NSSSNSRDDGNSVFPAKAPATGAGPAA). Residues 62–71 (DGGGGGGEES) are compositionally biased toward gly residues. The helical transmembrane segment at 137-158 (FYWDLIMLIMMVGNLVIIPVGI) threads the bilayer. At 159–167 (TFFTEQTTT) the chain is on the extracellular side. Residues 168-188 (PWIIFNVASDTVFLLDLIMNF) traverse the membrane as a helical segment. The Cytoplasmic portion of the chain corresponds to 189-209 (RTGTVNEDSSEIILDPKVIKM). Residues 210–230 (NYLKSWFVVDFISSIPVDYIF) form a helical membrane-spanning segment. The Extracellular segment spans residues 231–254 (LIVEKGMDSEVYKTARALRIVRFT). A helical; Voltage-sensor membrane pass occupies residues 255–275 (KILSLLRLLRLSRLIRYIHQW). The Cytoplasmic portion of the chain corresponds to 276-289 (EEIFHMTYDLASAV). Residues 290-312 (VRIFNLIGMMLLLCHWDGCLQFL) traverse the membrane as a helical segment. Topologically, residues 313-338 (VPLLQDFPPDCWVSLNEMVNDSWGKQ) are extracellular. N-linked (GlcNAc...) asparagine glycosylation is present at Asn-332. Positions 339 to 360 (YSYALFKAMSHMLCIGYGAQAP) form an intramembrane region, pore-forming. The short motif at 352–356 (CIGYG) is the Selectivity filter element. Topologically, residues 361–365 (VSMSD) are extracellular. The helical transmembrane segment at 366–386 (LWITMLSMIVGATCYAMFVGH) threads the bilayer. At 387–880 (ATALIQSLDS…AEKPRFASNL (494 aa)) the chain is on the cytoplasmic side. 7 residues coordinate 3',5'-cyclic AMP: Gly-533, Glu-534, Cys-536, Arg-543, Thr-544, Arg-584, and Arg-587. Over residues 641–664 (LNSTSSTATPTSRMRTQSPPVYTA) the composition is skewed to polar residues. Disordered regions lie at residues 641 to 686 (LNST…QPSA), 718 to 786 (ASQL…LPHE), and 835 to 880 (MSSG…ASNL). Composition is skewed to low complexity over residues 665-685 (TSLS…PQPS) and 725-738 (PQQQ…QTQP). The segment covering 760–770 (STQALPNTSLT) has biased composition (polar residues). Residues 844 to 855 (RGVPPAPPPPAA) show a composition bias toward pro residues. Basic and acidic residues predominate over residues 870-880 (EAEKPRFASNL).

Belongs to the potassium channel HCN family. As to quaternary structure, homotetramer. Heterotetramer with HCN2. The potassium channel is composed of a homo- or heterotetrameric complex of pore-forming subunits. Interacts with KCNE2. Interacts with the SH3 domain of CSK. Detected in myocytes in heart sinoatrial node (SAN) and in brain, in particular in the granule cell layer and in Purkinje neuron bodies in the cerebellum.

The protein localises to the cell membrane. It catalyses the reaction Na(+)(in) = Na(+)(out). It carries out the reaction K(+)(in) = K(+)(out). With respect to regulation, activated by cAMP. cAMP binding promotes tetramerization and formation of an active channel. Compared to other family members, cAMP has less stimulatory effect on HCN1 because part of the molecules already contain bound cAMP and form homotetramers when cAMP levels are low, this inherent tetramerization in HCN1 results in a weaker response to increased cAMP. Its function is as follows. Hyperpolarization-activated ion channel that are permeable to sodium and potassium ions. Exhibits weak selectivity for potassium over sodium ions. Contributes to the native pacemaker currents in heart (If) and in neurons (Ih). Participates in cerebellar mechanisms of motor learning. May mediate responses to sour stimuli. This Oryctolagus cuniculus (Rabbit) protein is Potassium/sodium hyperpolarization-activated cyclic nucleotide-gated channel 1 (HCN1).